Reading from the N-terminus, the 82-residue chain is RNA-binding protein Hfq (82 aa).

The Sm domain occupies 10–70 (DTFLNHVRKN…ISTIMPAQPV (61 aa)).

The protein belongs to the Hfq family. As to quaternary structure, homohexamer.

Functionally, RNA chaperone that binds small regulatory RNA (sRNAs) and mRNAs to facilitate mRNA translational regulation in response to envelope stress, environmental stress and changes in metabolite concentrations. Also binds with high specificity to tRNAs. In Parvibaculum lavamentivorans (strain DS-1 / DSM 13023 / NCIMB 13966), this protein is RNA-binding protein Hfq.